We begin with the raw amino-acid sequence, 147 residues long: Large ribosomal subunit protein bL9 (147 aa).

Belongs to the bacterial ribosomal protein bL9 family.

Functionally, binds to the 23S rRNA. In Geotalea uraniireducens (strain Rf4) (Geobacter uraniireducens), this protein is Large ribosomal subunit protein bL9.